Reading from the N-terminus, the 361-residue chain is Chorismate synthase (361 aa).

Residues R48 and R54 each coordinate NADP(+). FMN contacts are provided by residues 125–127 (RSS), 238–239 (NA), G278, 293–297 (KPTSS), and R319.

This sequence belongs to the chorismate synthase family. In terms of assembly, homotetramer. FMNH2 is required as a cofactor.

The enzyme catalyses 5-O-(1-carboxyvinyl)-3-phosphoshikimate = chorismate + phosphate. Its pathway is metabolic intermediate biosynthesis; chorismate biosynthesis; chorismate from D-erythrose 4-phosphate and phosphoenolpyruvate: step 7/7. Functionally, catalyzes the anti-1,4-elimination of the C-3 phosphate and the C-6 proR hydrogen from 5-enolpyruvylshikimate-3-phosphate (EPSP) to yield chorismate, which is the branch point compound that serves as the starting substrate for the three terminal pathways of aromatic amino acid biosynthesis. This reaction introduces a second double bond into the aromatic ring system. The chain is Chorismate synthase from Escherichia coli O1:K1 / APEC.